The chain runs to 182 residues: MQFNIPTLLTLFRVILIPFLVVVFYLPFAWAPMVSALIFCIAAITDWFDGFLARRWNQSTRFGAFLDPVADKVLVAIAMVLVTEHYHSWWVTLPAATMIAREIIISALREWMAELGKRSSVAVSWIGKVKTTAQMVALAWLLWRPNIWVEYAGIALFFVAAVLTLWSMLQYLSAARGDLLDQ.

The Cytoplasmic segment spans residues 2–12 (QFNIPTLLTLF). A helical membrane pass occupies residues 13 to 37 (RVILIPFLVVVFYLPFAWAPMVSAL). The Periplasmic portion of the chain corresponds to 38–60 (IFCIAAITDWFDGFLARRWNQST). A helical membrane pass occupies residues 61–81 (RFGAFLDPVADKVLVAIAMVL). Residues 82 to 86 (VTEHY) lie on the Cytoplasmic side of the membrane. The chain crosses the membrane as a helical span at residues 87–107 (HSWWVTLPAATMIAREIIISA). The Periplasmic portion of the chain corresponds to 108 to 145 (LREWMAELGKRSSVAVSWIGKVKTTAQMVALAWLLWRP). Residues 146 to 168 (NIWVEYAGIALFFVAAVLTLWSM) form a helical membrane-spanning segment. Residues 169 to 181 (LQYLSAARGDLLD) lie on the Cytoplasmic side of the membrane.

This sequence belongs to the CDP-alcohol phosphatidyltransferase class-I family.

The protein localises to the cell inner membrane. It carries out the reaction a CDP-1,2-diacyl-sn-glycerol + sn-glycerol 3-phosphate = a 1,2-diacyl-sn-glycero-3-phospho-(1'-sn-glycero-3'-phosphate) + CMP + H(+). It functions in the pathway phospholipid metabolism; phosphatidylglycerol biosynthesis; phosphatidylglycerol from CDP-diacylglycerol: step 1/2. Functionally, catalyzes the conversion of cytidine diphosphate diacylglycerol (CDP-DG) and glycerol 3-phosphate into phosphatidylglycerol. Essential for the synthesis of anionic phospholipids, thereby playing a role in balancing the ratio of zwitterionic and anionic phospholipids, which is thought to be important for normal membrane function. This is CDP-diacylglycerol--glycerol-3-phosphate 3-phosphatidyltransferase from Salmonella choleraesuis (strain SC-B67).